The following is a 78-amino-acid chain: Kassorin-S (78 aa).

Positions 1 to 22 (MLTLKKSMLLLFFLGMVSLSLA) are cleaved as a signal peptide. A propeptide spanning residues 23 to 64 (NSKRADEEGEDKRADEEGEDKRADEEGEDKRADEEGEEKRKR) is cleaved from the precursor. The interval 24–60 (SKRADEEGEDKRADEEGEDKRADEEGEDKRADEEGEE) is disordered. Over residues 25–60 (KRADEEGEDKRADEEGEDKRADEEGEDKRADEEGEE) the composition is skewed to basic and acidic residues. Leu-77 is subject to Leucine amide.

It belongs to the frog skin active peptide (FSAP) family. Brevinin subfamily. In terms of tissue distribution, expressed by the skin glands.

Its subcellular location is the secreted. Functionally, antimicrobial peptide. Active against the Gram-positive bacterium S.aureus (MIC=30 uM) and the yeast C.albicans (MIC=100 uM). Not effective against the Gram-negative bacterium E.coli at concentrations up to 250 uM. Lacks ability to induce contraction of smooth muscle in isolated guinea pig urinary bladder. Elicits histamine release from rat peritoneal mast cells. In Kassina senegalensis (Senegal running frog), this protein is Kassorin-S.